A 306-amino-acid chain; its full sequence is tRNA dimethylallyltransferase (306 aa).

Residue 6–13 (GPTASGKS) coordinates ATP. 8-13 (TASGKS) provides a ligand contact to substrate.

Belongs to the IPP transferase family. Monomer. Requires Mg(2+) as cofactor.

It carries out the reaction adenosine(37) in tRNA + dimethylallyl diphosphate = N(6)-dimethylallyladenosine(37) in tRNA + diphosphate. Catalyzes the transfer of a dimethylallyl group onto the adenine at position 37 in tRNAs that read codons beginning with uridine, leading to the formation of N6-(dimethylallyl)adenosine (i(6)A). The sequence is that of tRNA dimethylallyltransferase from Sphingopyxis alaskensis (strain DSM 13593 / LMG 18877 / RB2256) (Sphingomonas alaskensis).